A 260-amino-acid polypeptide reads, in one-letter code: Small ribosomal subunit protein uS3 (260 aa).

A KH type-2 domain is found at 39–114; that stretch reads LRQYIEQKLG…QIRINVVEVQ (76 aa). The disordered stretch occupies residues 219 to 260; that stretch reads EVAAPPPSTRDRDRDRGDRDREPRRRQQQRRRQQFEDRSNEG. Composition is skewed to basic and acidic residues over residues 227 to 243 and 251 to 260; these read TRDRDRDRGDRDREPRR and QQFEDRSNEG.

Belongs to the universal ribosomal protein uS3 family. In terms of assembly, part of the 30S ribosomal subunit. Forms a tight complex with proteins S10 and S14.

In terms of biological role, binds the lower part of the 30S subunit head. Binds mRNA in the 70S ribosome, positioning it for translation. The sequence is that of Small ribosomal subunit protein uS3 from Trichormus variabilis (strain ATCC 29413 / PCC 7937) (Anabaena variabilis).